The primary structure comprises 642 residues: Threonine--tRNA ligase (642 aa).

A TGS domain is found at 1 to 61 (MPVITLPDGS…ENDAQLSIIT (61 aa)). The tract at residues 243 to 534 (DHRKIGKQLD…LTEEFAGFFP (292 aa)) is catalytic. Lysine 286 is modified (N6-acetyllysine). Residues cysteine 334, histidine 385, and histidine 511 each contribute to the Zn(2+) site.

Belongs to the class-II aminoacyl-tRNA synthetase family. As to quaternary structure, homodimer. Requires Zn(2+) as cofactor.

The protein resides in the cytoplasm. The enzyme catalyses tRNA(Thr) + L-threonine + ATP = L-threonyl-tRNA(Thr) + AMP + diphosphate + H(+). Functionally, catalyzes the attachment of threonine to tRNA(Thr) in a two-step reaction: L-threonine is first activated by ATP to form Thr-AMP and then transferred to the acceptor end of tRNA(Thr). Also edits incorrectly charged L-seryl-tRNA(Thr). This is Threonine--tRNA ligase from Shigella boydii serotype 18 (strain CDC 3083-94 / BS512).